The chain runs to 144 residues: Nucleoside diphosphate kinase (144 aa).

Residues Lys11, Phe59, Arg87, Thr93, Arg104, and Asn114 each coordinate ATP. The active-site Pros-phosphohistidine intermediate is His117.

The protein belongs to the NDK family. In terms of assembly, homotetramer. Mg(2+) serves as cofactor.

The protein localises to the cytoplasm. The catalysed reaction is a 2'-deoxyribonucleoside 5'-diphosphate + ATP = a 2'-deoxyribonucleoside 5'-triphosphate + ADP. It carries out the reaction a ribonucleoside 5'-diphosphate + ATP = a ribonucleoside 5'-triphosphate + ADP. Its function is as follows. Major role in the synthesis of nucleoside triphosphates other than ATP. The ATP gamma phosphate is transferred to the NDP beta phosphate via a ping-pong mechanism, using a phosphorylated active-site intermediate. This chain is Nucleoside diphosphate kinase, found in Coxiella burnetii (strain CbuG_Q212) (Coxiella burnetii (strain Q212)).